The chain runs to 193 residues: Interleukin-18 (193 aa).

A propeptide spanning residues 1 to 36 (MAAEQVEDNCISFVEMKFINNTLYFVAENDEDLESD) is cleaved from the precursor.

The protein belongs to the IL-1 family. As to quaternary structure, forms a ternary complex with ligand-binding receptor subunit IL18R1 and signaling receptor subunit IL18RAP at the plasma membrane. Mature IL18 first binds to IL18R1 forming a low affinity binary complex, which then interacts with IL18RAP to form a high affinity ternary complex that signals inside the cell. Interacts with cargo receptor TMED10; the interaction mediates the translocation from the cytoplasm into the ERGIC (endoplasmic reticulum-Golgi intermediate compartment) and thereby secretion. In terms of processing, the pro-IL-18 precursor is processed by CASP1, CASP4 or CASP5 to yield its mature, active form. The pro-IL-18 precursor features autoinhibitory interactions between the propeptide and the post-cleavage-site region, preventing recognition by the IL18R1 receptor. Processing by CASP1, CASP4 or CASP5 induces conformational changes to generate critical receptor-binding sites. The mature form is then secreted and released in the extracellular milieu by passing through the gasdermin-D (GSDMD) pore. In contrast, cleavage by CASP3 inactivates IL18.

It localises to the cytoplasm. The protein resides in the cytosol. Its subcellular location is the secreted. In terms of biological role, pro-inflammatory cytokine primarily involved in epithelial barrier repair, polarized T-helper 1 (Th1) cell and natural killer (NK) cell immune responses. Upon binding to IL18R1 and IL18RAP, forms a signaling ternary complex which activates NF-kappa-B, triggering synthesis of inflammatory mediators. Synergizes with IL12/interleukin-12 to induce IFNG synthesis from T-helper 1 (Th1) cells and natural killer (NK) cells. Involved in transduction of inflammation downstream of pyroptosis: its mature form is specifically released in the extracellular milieu by passing through the gasdermin-D (GSDMD) pore. This is Interleukin-18 (IL18) from Boselaphus tragocamelus (Nilgai).